The sequence spans 421 residues: MMNSIENEEFIPILLGSDMNVYGMARSFNEAYGKICQAYASDQLAPTRYSKIVNVEVIPGFDKDPVFIETMLRLAKERYSDKSKKYLLIACGDGYAELISQHKQELSEYFICPYIDYSLFERLINKVSFYEVCEEYDLPYPKTLIVREEMLVNGHLEQELPFEFPVALKPANSVEYLSVQFEGRKKAFILETREEFDLILGRIYEAGYKSEMIVQDFIPGDDSNMRVLNAYVDEDHQVRMMCLGHPLLEDPTPASIGNYVVIMPDYNEKIYQTIKAFLEKIEYTGFANFDMKYDPRDGEYKLFEINLRQGRSSFFVTLNGLNLARFVTEDRVFNKPFVETTYGTNQSDKARLWMGVPKKIFLEYARENEDKKLAEQMIKENRYGTTVFYEKDRSIKRWLLMKYMFHNYIPRFKKYFHVKEG.

The ATP-grasp domain occupies 130–332; sequence YEVCEEYDLP…LARFVTEDRV (203 aa). Residue 161–224 participates in ATP binding; it reads PFEFPVALKP…QDFIPGDDSN (64 aa). Mg(2+) contacts are provided by Asp290, Glu304, and Asn306.

Mg(2+) serves as cofactor.

The enzyme catalyses [beta-GlcNAc-(1-&gt;4)-Mur2Ac(oyl-L-Ala-gamma-D-Glu-L-Lys-D-Ala-D-Ala)](n) + n D-aspartate + n ATP = [beta-GlcNAc-(1-&gt;4)-Mur2Ac(oyl-L-Ala-gamma-D-Glu-6-N-(beta-D-Asp)-L-Lys-D-Ala-D-Ala)]n + n ADP + n phosphate + n H(+). The protein operates within cell wall biogenesis; peptidoglycan biosynthesis. In terms of biological role, catalyzes the addition of D-aspartate onto the lysine residue in the peptidoglycan precursor UDP-MurNAc-pentapeptide. The ligation occurs between the beta-carboxylate of D-Asp and the epsilon-amino group of L-Lys. Is highly specific for D-aspartate, as L-aspartate, D-glutamate, D-alanine, D-iso-asparagine and D-malate are not substrates. The chain is D-aspartate ligase from Enterococcus faecium (strain Aus0004).